The primary structure comprises 204 residues: Proteasome subunit beta type-3-A (204 aa).

The protein belongs to the peptidase T1B family. In terms of assembly, component of the 20S core complex of the 26S proteasome. The 26S proteasome is composed of a core protease (CP), known as the 20S proteasome, capped at one or both ends by the 19S regulatory particle (RP/PA700). The 20S proteasome core is composed of 28 subunits that are arranged in four stacked rings, resulting in a barrel-shaped structure. The two end rings are each formed by seven alpha subunits, and the two central rings are each formed by seven beta subunits. The catalytic chamber with the active sites is on the inside of the barrel.

It is found in the cytoplasm. Its subcellular location is the nucleus. In terms of biological role, non-catalytic component of the proteasome, a multicatalytic proteinase complex which is characterized by its ability to cleave peptides with Arg, Phe, Tyr, Leu, and Glu adjacent to the leaving group at neutral or slightly basic pH. The proteasome has an ATP-dependent proteolytic activity. The polypeptide is Proteasome subunit beta type-3-A (PBC1) (Arabidopsis thaliana (Mouse-ear cress)).